We begin with the raw amino-acid sequence, 116 residues long: Putative RNase MJ0125 (116 aa).

Residues R76 and H81 contribute to the active site. The RX(4)HXY motif signature appears at 76–83 (RDKLIHQY). Y83 is subject to O-di-AMP-tyrosine.

The protein belongs to the HepT RNase toxin family. In terms of assembly, homodimer, probably forms a complex with cognate antitoxin MJ0126. In terms of processing, modified by cognate antitoxin MJ0126; probably at least 2 successive AMPylation events occur on Tyr-83.

Functionally, probable toxic component of a putative type VII toxin-antitoxin (TA) system, probably an RNase. Probably neutralized by cognate antitoxin MJ0126. Neutralization may be due to AMPylation by MJ0126. The polypeptide is Putative RNase MJ0125 (Methanocaldococcus jannaschii (strain ATCC 43067 / DSM 2661 / JAL-1 / JCM 10045 / NBRC 100440) (Methanococcus jannaschii)).